The following is a 141-amino-acid chain: Protein X (141 aa).

Residues 25 to 48 are compositionally biased toward low complexity; that stretch reads SSGPSFPRPAAGSAASSASSPSPS. The tract at residues 25–52 is disordered; sequence SSGPSFPRPAAGSAASSASSPSPSDESD. Residues 68–113 form a mitochondrial targeting sequence region; that stretch reads PCCLVFTCADLRTMDSTVNFVSWHANRQLGMPSKDLWTPYIKDQLL.

This sequence belongs to the orthohepadnavirus protein X family. May form homodimer. May interact with host CEBPA, CFLAR, CREB1, DDB1, E4F1, HBXIP, HSPD1/HSP60, NFKBIA, POLR2E and SMAD4. Interacts with host SMC5-SMC6 complex and induces its degradation. Interacts with host TRPC4AP; leading to prevent ubiquitination of TRPC4AP. Interacts with host PLSCR1; this interaction promotes ubiquitination and degradation of HBx and impairs HBx-mediated cell proliferation. A fraction may be phosphorylated in insect cells and HepG2 cells, a human hepatoblastoma cell line. Phosphorylated in vitro by host protein kinase C or mitogen-activated protein kinase. N-acetylated in insect cells.

The protein resides in the host cytoplasm. The protein localises to the host nucleus. It is found in the host mitochondrion. In terms of biological role, multifunctional protein that plays a role in silencing host antiviral defenses and promoting viral transcription. Does not seem to be essential for HBV infection. May be directly involved in development of cirrhosis and liver cancer (hepatocellular carcinoma). Most of cytosolic activities involve modulation of cytosolic calcium. The effect on apoptosis is controversial depending on the cell types in which the studies have been conducted. May induce apoptosis by localizing in mitochondria and causing loss of mitochondrial membrane potential. May also modulate apoptosis by binding host CFLAR, a key regulator of the death-inducing signaling complex (DISC). Promotes viral transcription by using the host E3 ubiquitin ligase DDB1 to target the SMC5-SMC6 complex to proteasomal degradation. This host complex would otherwise bind to viral episomal DNA, and prevents its transcription. Moderately stimulates transcription of many different viral and cellular transcription elements. Promoters and enhancers stimulated by HBx contain DNA binding sites for NF-kappa-B, AP-1, AP-2, c-EBP, ATF/CREB, or the calcium-activated factor NF-AT. In Marmota monax (Woodchuck), this protein is Protein X.